We begin with the raw amino-acid sequence, 274 residues long: MASLREQIITELGVQPVIEPKTEVRRRVDFLKDYLRSTPAQGFVLGISGGQDSTLTGRLCQLAAEEVRAEGGEATFVAVRLPYGVQADEHDAAVAMEFIGPDRAVTVNVKPGVDATAGAVAEGLGLDALRDFVRGNIKARERMIIQYAIAGQENLLVVGTDHAAEAVTGFFTKYGDGGVDLTPLTGLTKRQGAALLQELGAPPSTWSKVPTADLEDDRPALPDEEALGLRYSEIDDYLEGKEVTEAVAARVEQLYTATRHKRTVPVSPLDSWWR.

46–53 (GISGGQDS) is a binding site for ATP. Position 52 (D52) interacts with Mg(2+). R140 contributes to the deamido-NAD(+) binding site. An ATP-binding site is contributed by T160. E165 lines the Mg(2+) pocket. K173 and D180 together coordinate deamido-NAD(+). Residues K189 and T211 each contribute to the ATP site. 260–261 (HK) is a deamido-NAD(+) binding site.

This sequence belongs to the NAD synthetase family. Homodimer.

It catalyses the reaction deamido-NAD(+) + NH4(+) + ATP = AMP + diphosphate + NAD(+) + H(+). It participates in cofactor biosynthesis; NAD(+) biosynthesis; NAD(+) from deamido-NAD(+) (ammonia route): step 1/1. Catalyzes the ATP-dependent amidation of deamido-NAD to form NAD. Uses ammonia as a nitrogen source. In Nocardia farcinica (strain IFM 10152), this protein is NH(3)-dependent NAD(+) synthetase.